We begin with the raw amino-acid sequence, 307 residues long: Myeloid-associated differentiation marker-like protein 2 (307 aa).

2 consecutive MARVEL domains span residues 17–154 and 159–303; these read AVTS…ARPG and YMAT…RIRF. A run of 7 helical transmembrane segments spans residues 53-73, 90-110, 129-149, 163-183, 198-218, 232-252, and 278-298; these read FCMA…ACEF, AFAM…PLYF, LAAS…VALT, VSGL…GALV, VAVY…SVMG, IVYT…WPVF, and LVVA…LAYS.

It belongs to the MAL family.

It localises to the membrane. In Mus musculus (Mouse), this protein is Myeloid-associated differentiation marker-like protein 2 (Myadml2).